Here is a 673-residue protein sequence, read N- to C-terminus: Pesticin receptor (673 aa).

A signal peptide spans 1-22 (MKMTRLYPLALGGLLLPAIANA). The TonB box motif lies at 30–37 (STLEVTAS). Residues 41–155 (SRSASANNVS…QGGIINIVTQ (115 aa)) enclose the TBDR plug domain. The region spanning 160–672 (TPRGYIEGGV…TVGINTRIDF (513 aa)) is the TBDR beta-barrel domain. Residues 657 to 673 (QVNMGRTVGINTRIDFF) carry the TonB C-terminal box motif.

The protein belongs to the TonB-dependent receptor family.

Its subcellular location is the cell outer membrane. Functionally, receptor for the bacteriocin pesticin and for the siderophore yersiniabactin. The polypeptide is Pesticin receptor (fyuA) (Yersinia enterocolitica).